A 329-amino-acid chain; its full sequence is Protein-arginine N-acetylglucosaminyltransferase NleB1 (329 aa).

The N-beta-linked (GlcNAc) arginine; by autocatalysis glycan is linked to Arg13. 48–50 (QWF) provides a ligand contact to UDP-N-acetyl-alpha-D-glucosamine. Arg53 carries an N-beta-linked (GlcNAc) arginine; by autocatalysis glycan. Tyr72 lines the UDP-N-acetyl-alpha-D-glucosamine pocket. Arg159 is a glycosylation site (N-beta-linked (GlcNAc) arginine; by autocatalysis). Residue 219–222 (YLDA) coordinates UDP-N-acetyl-alpha-D-glucosamine. The DXD motif motif lies at 221 to 223 (DAD). Mn(2+) is bound at residue Asp223. Glu253 serves as the catalytic Proton acceptor. An N-beta-linked (GlcNAc) arginine; by autocatalysis glycan is attached at Arg293. Mn(2+) contacts are provided by Asn320 and Ser322. UDP-N-acetyl-alpha-D-glucosamine contacts are provided by residues Ser322 and 327–329 (SSW).

This sequence belongs to the glycosyltransferase NleB family. Mn(2+) is required as a cofactor. Auto-glycosylated: arginine GlcNAcylation is required for activity toward death domain-containing host target proteins.

It localises to the secreted. The protein localises to the host cytoplasm. The enzyme catalyses L-arginyl-[protein] + UDP-N-acetyl-alpha-D-glucosamine = N(omega)-(N-acetyl-beta-D-glucosaminyl)-L-arginyl-[protein] + UDP + H(+). In terms of biological role, protein-arginine N-acetylglucosaminyltransferase effector that disrupts TNF signaling in infected cells, including NF-kappa-B signaling, apoptosis and necroptosis. Acts by catalyzing the transfer of a single N-acetylglucosamine (GlcNAc) to a conserved arginine residue in the death domain of host proteins FADD, TRADD, FAS, TNFRSF1A/TNFR1, TNFRSF25/DR3 and RIPK1: arginine GlcNAcylation prevents homotypic/heterotypic death domain interactions and assembly of the oligomeric TNF-alpha receptor complex, thereby disrupting TNF signaling. Has preference for host FADD as substrate compared to other death domain-containing proteins. Also acts on host proteins without a death domain: catalyzes arginine GlcNAcylation of HIF1A, thereby regulating host glucose metabolism. Also displays intra-bacterial activity by mediating GlcNAcylation of glutathione synthetase GshB. Catalyzes auto-GlcNAcylation, which is required for activity toward death domain-containing host target proteins. Shows a higher enzymatic activity than NleB2. The chain is Protein-arginine N-acetylglucosaminyltransferase NleB1 from Escherichia coli O127:H6 (strain E2348/69 / EPEC).